Reading from the N-terminus, the 92-residue chain is Small ribosomal subunit protein uS19 (92 aa).

Belongs to the universal ribosomal protein uS19 family.

Protein S19 forms a complex with S13 that binds strongly to the 16S ribosomal RNA. This Bartonella henselae (strain ATCC 49882 / DSM 28221 / CCUG 30454 / Houston 1) (Rochalimaea henselae) protein is Small ribosomal subunit protein uS19.